The primary structure comprises 341 residues: S-adenosylmethionine:tRNA ribosyltransferase-isomerase (341 aa).

It belongs to the QueA family. In terms of assembly, monomer.

It localises to the cytoplasm. It carries out the reaction 7-aminomethyl-7-carbaguanosine(34) in tRNA + S-adenosyl-L-methionine = epoxyqueuosine(34) in tRNA + adenine + L-methionine + 2 H(+). It participates in tRNA modification; tRNA-queuosine biosynthesis. Transfers and isomerizes the ribose moiety from AdoMet to the 7-aminomethyl group of 7-deazaguanine (preQ1-tRNA) to give epoxyqueuosine (oQ-tRNA). The polypeptide is S-adenosylmethionine:tRNA ribosyltransferase-isomerase (Chlorobium luteolum (strain DSM 273 / BCRC 81028 / 2530) (Pelodictyon luteolum)).